A 426-amino-acid polypeptide reads, in one-letter code: Tetracenomycin polyketide synthase ketoacyl synthase alpha subunit (426 aa).

A Ketosynthase family 3 (KS3) domain is found at 6–420; sequence EKRVVITGIG…GFQSAAVLAR (415 aa). Residues cysteine 173, histidine 313, and histidine 350 each act as for beta-ketoacyl synthase activity in the active site.

This sequence belongs to the thiolase-like superfamily. Beta-ketoacyl-ACP synthases family. As to quaternary structure, the tetracenomycin polyketide synthase (TCM PKS) is composed of a ketosynthase complex (TcmKL), an acyl carrier protein (TcmM), a cyclase (TcmN) and a probable second cyclase (TcmJ). TcmK and TcmL form a heterodimeric complex.

The enzyme catalyses 10 malonyl-CoA + 8 H(+) = tetracenomycin F2 + 10 CO2 + 10 CoA + 2 H2O. It functions in the pathway antibiotic biosynthesis; tetracenomycin C biosynthesis. In terms of biological role, involved in the biosynthesis of tetracenomycin C (TCM C). Part of a type II polyketide synthase (PKS) that catalyzes the synthesis of tetracenomycin F2 (TCM F2), a precursor of TCM C, from malonyl-CoA. TcmK and TcmL form a heterodimeric alpha-beta complex that catalyzes the condensation reactions between the growing acyl-enzyme chain and the malonyl-CoA extender units. This is Tetracenomycin polyketide synthase ketoacyl synthase alpha subunit from Streptomyces glaucescens.